We begin with the raw amino-acid sequence, 597 residues long: Elongation factor 4 (597 aa).

The tr-type G domain maps to 2-184; that stretch reads DHIRNFSIIA…SLIAKVPPPK (183 aa). GTP-binding positions include 14–19 and 131–134; these read DHGKST and NKID.

The protein belongs to the TRAFAC class translation factor GTPase superfamily. Classic translation factor GTPase family. LepA subfamily.

Its subcellular location is the cell inner membrane. The catalysed reaction is GTP + H2O = GDP + phosphate + H(+). In terms of biological role, required for accurate and efficient protein synthesis under certain stress conditions. May act as a fidelity factor of the translation reaction, by catalyzing a one-codon backward translocation of tRNAs on improperly translocated ribosomes. Back-translocation proceeds from a post-translocation (POST) complex to a pre-translocation (PRE) complex, thus giving elongation factor G a second chance to translocate the tRNAs correctly. Binds to ribosomes in a GTP-dependent manner. The sequence is that of Elongation factor 4 from Burkholderia cenocepacia (strain HI2424).